Here is a 320-residue protein sequence, read N- to C-terminus: Transcription factor NAI1 (320 aa).

A disordered region spans residues T53–V105. Residues T58–S80 show a composition bias toward low complexity. The segment covering Q81–V105 has biased composition (polar residues). In terms of domain architecture, bHLH spans H128–L177.

In terms of assembly, homodimer. Expressed constitutively in roots, leaves, stems, and flowers.

The protein resides in the nucleus. Functionally, transcription activator that regulates the expression of at least NAI2, PYK10 and PBP1. Required for and mediates the formation of endoplasmic reticulum bodies (ER bodies). Involved in the symbiotic interactions with the endophytes of the Sebacinaceae fungus family, such as Piriformospora indica and Sebacina. The protein is Transcription factor NAI1 (NAI1) of Arabidopsis thaliana (Mouse-ear cress).